The chain runs to 263 residues: Dermonecrotic toxin SpaSicTox-betaIF1 (263 aa).

Residues Glu-15 and Asp-17 each coordinate Mg(2+). His-31 serves as the catalytic Nucleophile. 2 disulfide bridges follow: Cys-35-Cys-41 and Cys-37-Cys-179. Asp-75 lines the Mg(2+) pocket.

It belongs to the arthropod phospholipase D family. Class II subfamily. Mg(2+) serves as cofactor. As to expression, expressed by the venom gland.

It is found in the secreted. It carries out the reaction an N-(acyl)-sphingosylphosphocholine = an N-(acyl)-sphingosyl-1,3-cyclic phosphate + choline. The catalysed reaction is an N-(acyl)-sphingosylphosphoethanolamine = an N-(acyl)-sphingosyl-1,3-cyclic phosphate + ethanolamine. It catalyses the reaction a 1-acyl-sn-glycero-3-phosphocholine = a 1-acyl-sn-glycero-2,3-cyclic phosphate + choline. The enzyme catalyses a 1-acyl-sn-glycero-3-phosphoethanolamine = a 1-acyl-sn-glycero-2,3-cyclic phosphate + ethanolamine. Functionally, dermonecrotic toxins cleave the phosphodiester linkage between the phosphate and headgroup of certain phospholipids (sphingolipid and lysolipid substrates), forming an alcohol (often choline) and a cyclic phosphate. This toxin acts on sphingomyelin (SM). It may also act on ceramide phosphoethanolamine (CPE), lysophosphatidylcholine (LPC) and lysophosphatidylethanolamine (LPE), but not on lysophosphatidylserine (LPS), and lysophosphatidylglycerol (LPG). It acts by transphosphatidylation, releasing exclusively cyclic phosphate products as second products. Induces dermonecrosis, hemolysis, increased vascular permeability, edema, inflammatory response, and platelet aggregation. The chain is Dermonecrotic toxin SpaSicTox-betaIF1 from Sicarius patagonicus (Six-eyed sand spider).